A 192-amino-acid chain; its full sequence is MSIQNEMPGYNDVDQLLNQQGVGLTPAEMHGLISGLLCGGNTDSSWLPMVHDLTNEGLAFGHELAQALRNMHSAISDSLDDDGFLFQLYLPEGDAVSVFDRADALAGWVNHFLLGLGVSQPKLDKVKDETGEAIDDLRNIAQLGYDEDEDQEELEMSLEEIIEYVRVAALLCHDTFSRQQPTAPEVRKPTLH.

This sequence belongs to the UPF0149 family.

This chain is UPF0149 protein KPK_0755, found in Klebsiella pneumoniae (strain 342).